The chain runs to 305 residues: Glycine--tRNA ligase alpha subunit (305 aa).

It belongs to the class-II aminoacyl-tRNA synthetase family. As to quaternary structure, tetramer of two alpha and two beta subunits.

The protein resides in the cytoplasm. The catalysed reaction is tRNA(Gly) + glycine + ATP = glycyl-tRNA(Gly) + AMP + diphosphate. The chain is Glycine--tRNA ligase alpha subunit from Streptococcus pyogenes serotype M4 (strain MGAS10750).